The sequence spans 246 residues: Major prion protein (246 aa).

An N-terminal signal peptide occupies residues 1-15 (MLVVFVATWSDLGLC). Residues 16-223 (KKRPKPGGWN…ESQAYYQRGS (208 aa)) are interaction with GRB2, ERI3 and SYN1. The interval 18–100 (RPKPGGWNTG…QWHKPSKPKT (83 aa)) is disordered. A run of 5 repeats spans residues 44 to 52 (PQGGGGWGQ), 53 to 60 (PHGGGWGQ), 61 to 68 (PHGGGWGQ), 69 to 76 (PHGGGWGQ), and 77 to 84 (PHGGGWGQ). A 5 X 8 AA tandem repeats of P-H-G-G-G-W-G-Q region spans residues 44 to 84 (PQGGGGWGQPHGGGWGQPHGGGWGQPHGGGWGQPHGGGWGQ). Gly residues predominate over residues 45-88 (QGGGGWGQPHGGGWGQPHGGGWGQPHGGGWGQPHGGGWGQGGGT). Histidine 54, glycine 55, glycine 56, histidine 62, glycine 63, glycine 64, histidine 70, glycine 71, glycine 72, histidine 78, glycine 79, and glycine 80 together coordinate Cu(2+). Basic residues predominate over residues 91 to 100 (QWHKPSKPKT). A disulfide bridge connects residues cysteine 172 and cysteine 207. 2 N-linked (GlcNAc...) asparagine glycosylation sites follow: asparagine 174 and asparagine 190. Residue serine 223 is the site of GPI-anchor amidated serine attachment. Positions 224–246 (SMVLFSSPPVILLISFLIFLIVG) are cleaved as a propeptide — removed in mature form.

This sequence belongs to the prion family. In terms of assembly, monomer and homodimer. Has a tendency to aggregate into amyloid fibrils containing a cross-beta spine, formed by a steric zipper of superposed beta-strands. Soluble oligomers may represent an intermediate stage on the path to fibril formation. Copper binding may promote oligomerization. Interacts with GRB2, APP, ERI3/PRNPIP and SYN1. Mislocalized cytosolically exposed PrP interacts with MGRN1; this interaction alters MGRN1 subcellular location and causes lysosomal enlargement. Interacts with KIAA1191.

It is found in the cell membrane. It localises to the golgi apparatus. Its function is as follows. Its primary physiological function is unclear. Has cytoprotective activity against internal or environmental stresses. May play a role in neuronal development and synaptic plasticity. May be required for neuronal myelin sheath maintenance. May play a role in iron uptake and iron homeostasis. Soluble oligomers are toxic to cultured neuroblastoma cells and induce apoptosis (in vitro). Association with GPC1 (via its heparan sulfate chains) targets PRNP to lipid rafts. Also provides Cu(2+) or Zn(2+) for the ascorbate-mediated GPC1 deaminase degradation of its heparan sulfate side chains. The chain is Major prion protein (PRNP) from Erythrocebus patas (Red guenon).